Here is a 212-residue protein sequence, read N- to C-terminus: Thymidylate kinase (212 aa).

10 to 17 contributes to the ATP binding site; the sequence is GLEGAGKT.

This sequence belongs to the thymidylate kinase family.

It catalyses the reaction dTMP + ATP = dTDP + ADP. In terms of biological role, phosphorylation of dTMP to form dTDP in both de novo and salvage pathways of dTTP synthesis. The protein is Thymidylate kinase of Photorhabdus laumondii subsp. laumondii (strain DSM 15139 / CIP 105565 / TT01) (Photorhabdus luminescens subsp. laumondii).